A 509-amino-acid polypeptide reads, in one-letter code: Zinc metalloproteinase aureolysin (509 aa).

An N-terminal signal peptide occupies residues 1-27 (MRKFSRYAFTSMATVTLLSSLTPAALA). Residues 28-208 (SDTNHKPATS…VVEKTNLVKE (181 aa)) constitute a propeptide that is removed on maturation. Aspartate 348 contributes to the Ca(2+) binding site. Residue histidine 352 participates in Zn(2+) binding. Glutamate 353 is a catalytic residue. Positions 356 and 376 each coordinate Zn(2+). The Ca(2+) site is built by aspartate 387, glutamate 389, aspartate 390, leucine 392, glutamate 395, tyrosine 398, threonine 399, lysine 402, and aspartate 405. The active-site Proton donor is the histidine 436.

This sequence belongs to the peptidase M4 family. Monomer. It depends on Ca(2+) as a cofactor. The cofactor is Zn(2+).

The enzyme catalyses Cleavage of insulin B chain with specificity similar to that of thermolysin, preferring hydrophobic P1' residues. Activates the glutamyl endopeptidase (EC 3.4.21.19) of Staphylococcus aureus.. Its function is as follows. Plays an essential role in immune evasion by helping bacteria to resist complement-mediated killing by neutrophils. Inhibits the deposition of host C3b on bacterial surfaces and the release of the chemoattractant C5a by cleaving the central complement protein C3. The cleavage site renders the C3b molecule vulnerable to proteolytic degradation by host regulators. Cleaves and inactivates host SERPINA1, which is an endogenous protease inhibitor essential for controlling neutrophil serine protease elastase. Also plays an essential role in the cleavage and subsequent activation of the serine protease SspA (glutamyl endopeptidase) which is involved in colonization and infection of human tissues. The sequence is that of Zinc metalloproteinase aureolysin from Staphylococcus aureus.